A 93-amino-acid chain; its full sequence is MTKSELIENLVSLNPALQVKSVEDGVKEILEQIMLFLERGERVEVRGFGSFSLHYRQPRVGRNPKTGESVKLDAKYVPHFKAGKDLKERVDLV.

It belongs to the bacterial histone-like protein family. In terms of assembly, heterodimer of an alpha and a beta chain.

Its function is as follows. This protein is one of the two subunits of integration host factor, a specific DNA-binding protein that functions in genetic recombination as well as in transcriptional and translational control. This Actinobacillus pleuropneumoniae serotype 7 (strain AP76) protein is Integration host factor subunit beta.